A 279-amino-acid chain; its full sequence is Replication factor A protein 2 (279 aa).

The tract at residues Gly-26–Gly-47 is disordered. Over residues Tyr-32–Ala-46 the composition is skewed to polar residues. Positions Val-80 to Ile-140 form a DNA-binding region, OB.

The protein belongs to the replication factor A protein 2 family. As to quaternary structure, heterotrimer of 68, 30, and 12 kDa chains. Post-translationally, phosphorylated in a cell cycle-dependent manner. Hypophosphorylated in G1, becomes phosphorylated at the G1/S boundary, it is maintained in this state through the M phase.

It is found in the nucleus. In terms of biological role, binds to single-stranded sequences. This Schizosaccharomyces pombe (strain 972 / ATCC 24843) (Fission yeast) protein is Replication factor A protein 2 (ssb2).